A 407-amino-acid chain; its full sequence is Endo-1,4-beta-xylanase D (407 aa).

An N-terminal signal peptide occupies residues 1 to 19 (MTLVKSILLALAAGHVAQA). Residues 20–333 (QLNTAAKAAG…KPAYYGILAG (314 aa)) enclose the GH10 domain. Asn-118 carries N-linked (GlcNAc...) asparagine glycosylation. The Proton donor role is filled by Glu-148. Glu-255 functions as the Nucleophile in the catalytic mechanism. A disulfide bridge connects residues Cys-283 and Cys-289. A disordered region spans residues 337 to 364 (GSGSSSSTSSTTLITTTTPTASSSTTSA). One can recognise a CBM1 domain in the interval 371 to 407 (SGAAHWGQCGGIGWSGPTICVSPYTCQVLNPYYSQCL).

It belongs to the glycosyl hydrolase 10 (cellulase F) family.

The protein resides in the secreted. It carries out the reaction Endohydrolysis of (1-&gt;4)-beta-D-xylosidic linkages in xylans.. It participates in glycan degradation; xylan degradation. Its activity is regulated as follows. Inhibited by wheat xylanase inhibiting protein I (XIP-I). In terms of biological role, endo-1,4-beta-xylanase involved in the hydrolysis of xylan, a major structural heterogeneous polysaccharide found in plant biomass representing the second most abundant polysaccharide in the biosphere, after cellulose. Shows an endo-mode of action on xylan forming mainly xylobiose and short-chain xylooligosaccharides (XOS). This chain is Endo-1,4-beta-xylanase D (xynD), found in Talaromyces funiculosus (Fruitlet core rot fungus).